A 500-amino-acid polypeptide reads, in one-letter code: Lycopene beta cyclase, chloroplastic (500 aa).

Residues 1 to 81 constitute a chloroplast transit peptide; that stretch reads MDTLLKTPNK…ELPMYDPSKG (81 aa). Position 86-114 (86-114) interacts with NAD(+); sequence LAVVGGGPAGLAVAQQVSEAGLSVVSIDP.

The protein belongs to the lycopene cyclase family.

It is found in the plastid. The protein resides in the chloroplast. The catalysed reaction is a carotenoid psi-end group = a carotenoid beta-end derivative. Its pathway is carotenoid biosynthesis; beta-carotene biosynthesis. It participates in carotenoid biosynthesis; beta-zeacarotene biosynthesis. Its function is as follows. Catalyzes the double cyclization reaction which converts lycopene to beta-carotene and neurosporene to beta-zeacarotene. This Nicotiana tabacum (Common tobacco) protein is Lycopene beta cyclase, chloroplastic (LCY1).